We begin with the raw amino-acid sequence, 585 residues long: Putative ABC transporter ATP-binding protein MG187 (585 aa).

In terms of domain architecture, ABC transporter spans 8–468 (IELKNIVVDF…PANEFVARFL (461 aa)). 40–47 (GPSGCGKT) is a binding site for ATP.

This sequence belongs to the ABC transporter superfamily.

This chain is Putative ABC transporter ATP-binding protein MG187, found in Mycoplasma genitalium (strain ATCC 33530 / DSM 19775 / NCTC 10195 / G37) (Mycoplasmoides genitalium).